Here is a 301-residue protein sequence, read N- to C-terminus: NTE family protein RssA (301 aa).

Residues 8–168 (LALGSGAARG…VNPIPISLTR (161 aa)) enclose the PNPLA domain. Residues 39–43 (GCSIG) carry the GXSXG motif. Ser41 acts as the Nucleophile in catalysis. Asp155 serves as the catalytic Proton acceptor. A DGA/G motif is present at residues 155 to 157 (DGA).

It belongs to the NTE family.

This Escherichia coli (strain K12) protein is NTE family protein RssA (rssA).